Reading from the N-terminus, the 452-residue chain is Agmatine coumaroyltransferase (452 aa).

Catalysis depends on proton acceptor residues H163 and D396.

This sequence belongs to the plant acyltransferase family.

The enzyme catalyses 4-coumaroyl-CoA + agmatine = N-(4-guanidinobutyl)-4-hydroxycinnamamide + CoA + H(+). Involved in the biosynthesis of hydroxycinnamic acid amides, which play a role in defense against pathogens. Agmatine is the preferred acyl acceptor, lower activity is observed towards putrescine. The preferred acyl donor is p-coumaroyl-CoA, lower activity is seen towards feruloyl-CoA. This Arabidopsis thaliana (Mouse-ear cress) protein is Agmatine coumaroyltransferase.